A 464-amino-acid polypeptide reads, in one-letter code: MNTLLVGINVAVMLILVGVLYYMQRKHVSFNKRVFTALGIGIIFGLILQFIYEPTSKVIIESNTWFGLIGSGYVKLLQMIVMPLILVSIISAFTKLQLTKNLGKISGLIIGILILTTGIAAAVGIAASAGFDVSATGLQQGDAESARLKLVEERFTSIEKTTIPDKLLELLPTNPFLDLTGARPTSTISVVIFAAFIGIAFIGVKRKYPEQAELFKKMLDAVYAIVMRMVTLILRLTPYGVLALMAKTVAGSDINAILKLGNFVLASYVALIVMFVIHLLLIALSGLNPIQYLKKVFPVLTFAFTSRSSAGAMPLNIEAQKEKLGISEGIANFAASFGVSIGQNGCAGIYPAMLAMMVAPTVGIDPLQPQFILTLIAVVAISSFGVAGVGGGATFAALIVLSTMNLPIGIVALVISVEPLIDMGRTALNVSGSMTAGLISSKWLGELDQDTYNQDDTKTGEIAS.

The next 10 helical transmembrane spans lie at 3-23, 34-54, 73-93, 107-127, 184-204, 225-245, 263-283, 347-367, 371-391, and 395-415; these read TLLVGINVAVMLILVGVLYYM, VFTALGIGIIFGLILQFIYEP, YVKLLQMIVMPLILVSIISAF, GLIIGILILTTGIAAAVGIAA, PTSTISVVIFAAFIGIAFIGV, IVMRMVTLILRLTPYGVLALM, FVLASYVALIVMFVIHLLLIA, AGIYPAMLAMMVAPTVGIDPL, FILTLIAVVAISSFGVAGVGG, and FAALIVLSTMNLPIGIVALVI.

The protein belongs to the dicarboxylate/amino acid:cation symporter (DAACS) (TC 2.A.23) family.

It is found in the membrane. Its function is as follows. Mediates uptake of L-cystine, the oxidized form of L-cysteine. In Bacillus thuringiensis (strain Al Hakam), this protein is L-cystine uptake protein TcyP.